The sequence spans 556 residues: Serine beta-lactamase-like protein LACTB, mitochondrial (556 aa).

The N-terminal 117 residues, Met1 to Leu117, are a transit peptide targeting the mitochondrion. The active-site Acyl-ester intermediate is the Ser166. Residues Glu249–Gly282 show a composition bias toward basic and acidic residues. Positions Glu249 to Lys290 are disordered. 2 positions are modified to N6-succinyllysine: Lys290 and Lys291. Residues Lys304 and Lys349 each carry the N6-acetyllysine modification.

This sequence belongs to the peptidase S12 family.

The protein resides in the mitochondrion. Its function is as follows. Mitochondrial serine protease that acts as a regulator of mitochondrial lipid metabolism. Acts by decreasing protein levels of PISD, a mitochondrial enzyme that converts phosphatidylserine (PtdSer) to phosphatidylethanolamine (PtdEtn), thereby affecting mitochondrial lipid metabolism. It is unclear whether it acts directly by mediating proteolysis of PISD or by mediating proteolysis of another lipid metabolism protein. The polypeptide is Serine beta-lactamase-like protein LACTB, mitochondrial (Bos taurus (Bovine)).